The sequence spans 620 residues: Long-chain fatty acid transport protein 2 (620 aa).

Over 1–4 (MLPV) the chain is Lumenal. A helical membrane pass occupies residues 5 to 27 (LYTGLAGLLLLPLLLTCCCPYLL). The Cytoplasmic portion of the chain corresponds to 28–106 (QDVRFFLQLA…DHLGLRQGDC (79 aa)). The chain crosses the membrane as a helical span at residues 107–127 (VALFMGNEPAYVWLWLGLLKL). The Lumenal segment spans residues 128-267 (GCPMACLNYN…DVIYTTMPLY (140 aa)). 222-233 (YIYTSGTTGLPK) lines the AMP pocket. Residues 268 to 288 (HSAALMIGLHGCIVVGATFAL) form a helical membrane-spanning segment. Over 289 to 620 (RSKFSASQFW…NAIIDKTLKL (332 aa)) the chain is Cytoplasmic. Lysine 291 carries the N6-acetyllysine modification. A Phosphothreonine modification is found at threonine 577.

It belongs to the ATP-dependent AMP-binding enzyme family. Liver and kidney (at protein level).

The protein resides in the endoplasmic reticulum membrane. It is found in the peroxisome membrane. It localises to the cell membrane. The protein localises to the microsome. It carries out the reaction a fatty acid(in) = a fatty acid(out). The catalysed reaction is (9Z)-octadecenoate(out) = (9Z)-octadecenoate(in). It catalyses the reaction a long-chain fatty acid + ATP + CoA = a long-chain fatty acyl-CoA + AMP + diphosphate. The enzyme catalyses (5Z,8Z,11Z,14Z)-eicosatetraenoate + ATP + CoA = (5Z,8Z,11Z,14Z)-eicosatetraenoyl-CoA + AMP + diphosphate. It carries out the reaction (9Z,12Z,15Z)-octadecatrienoate + ATP + CoA = (9Z,12Z,15Z)-octadecatrienoyl-CoA + AMP + diphosphate. The catalysed reaction is hexadecanoate + ATP + CoA = hexadecanoyl-CoA + AMP + diphosphate. It catalyses the reaction (9Z)-octadecenoate + ATP + CoA = (9Z)-octadecenoyl-CoA + AMP + diphosphate. The enzyme catalyses 2,6,10,14-tetramethylpentadecanoate + ATP + CoA = pristanoyl-CoA + AMP + diphosphate. It carries out the reaction (E)-hexadec-2-enoate + ATP + CoA = (2E)-hexadecenoyl-CoA + AMP + diphosphate. The catalysed reaction is 3,7,11,15-tetramethylhexadecanoate + ATP + CoA = phytanoyl-CoA + AMP + diphosphate. It catalyses the reaction a very long-chain fatty acid + ATP + CoA = a very long-chain fatty acyl-CoA + AMP + diphosphate. The enzyme catalyses tetracosanoate + ATP + CoA = tetracosanoyl-CoA + AMP + diphosphate. It carries out the reaction (4Z,7Z,10Z,13Z,16Z,19Z)-docosahexaenoate + ATP + CoA = (4Z,7Z,10Z,13Z,16Z,19Z)-docosahexaenoyl-CoA + AMP + diphosphate. The catalysed reaction is (25R)-3alpha,7alpha,12alpha-trihydroxy-5beta-cholestan-26-oate + ATP + CoA = (25R)-3alpha,7alpha,12alpha-trihydroxy-5beta-cholestan-26-oyl-CoA + AMP + diphosphate. In terms of biological role, mediates the import of long-chain fatty acids (LCFA) into the cell by facilitating their transport across cell membranes, playing an important role in hepatic fatty acid uptake. Also functions as an acyl-CoA ligase catalyzing the ATP-dependent formation of fatty acyl-CoA using LCFA and very-long-chain fatty acids (VLCFA) as substrates, which prevents fatty acid efflux from cells and might drive more fatty acid uptake. Plays a pivotal role in regulating available LCFA substrates from exogenous sources in tissues undergoing high levels of beta-oxidation or triglyceride synthesis. Can also activate branched-chain fatty acids such as phytanic acid and pristanic acid. May contribute to the synthesis of sphingosine-1-phosphate. Does not activate C24 bile acids, cholate and chenodeoxycholate. In vitro, activates 3-alpha,7-alpha,12-alpha-trihydroxy-5-beta-cholestanate (THCA), the C27 precursor of cholic acid deriving from the de novo synthesis from cholesterol. However, it is not critical for THCA activation and bile synthesis in vivo. In Rattus norvegicus (Rat), this protein is Long-chain fatty acid transport protein 2 (Slc27a2).